Consider the following 442-residue polypeptide: D-serine dehydratase (442 aa).

Lysine 118 is subject to N6-(pyridoxal phosphate)lysine.

Belongs to the serine/threonine dehydratase family. DsdA subfamily. Monomer. Requires pyridoxal 5'-phosphate as cofactor.

The enzyme catalyses D-serine = pyruvate + NH4(+). The polypeptide is D-serine dehydratase (Citrobacter koseri (strain ATCC BAA-895 / CDC 4225-83 / SGSC4696)).